We begin with the raw amino-acid sequence, 247 residues long: NAD(P)H-quinone oxidoreductase subunit K (247 aa).

[4Fe-4S] cluster is bound by residues Cys-63, Cys-64, Cys-128, and Cys-159.

This sequence belongs to the complex I 20 kDa subunit family. In terms of assembly, NDH-1 can be composed of about 15 different subunits; different subcomplexes with different compositions have been identified which probably have different functions. [4Fe-4S] cluster serves as cofactor.

The protein resides in the cellular thylakoid membrane. It carries out the reaction a plastoquinone + NADH + (n+1) H(+)(in) = a plastoquinol + NAD(+) + n H(+)(out). It catalyses the reaction a plastoquinone + NADPH + (n+1) H(+)(in) = a plastoquinol + NADP(+) + n H(+)(out). Functionally, NDH-1 shuttles electrons from an unknown electron donor, via FMN and iron-sulfur (Fe-S) centers, to quinones in the respiratory and/or the photosynthetic chain. The immediate electron acceptor for the enzyme in this species is believed to be plastoquinone. Couples the redox reaction to proton translocation, and thus conserves the redox energy in a proton gradient. Cyanobacterial NDH-1 also plays a role in inorganic carbon-concentration. The polypeptide is NAD(P)H-quinone oxidoreductase subunit K (Microcystis aeruginosa (strain NIES-843 / IAM M-2473)).